A 115-amino-acid chain; its full sequence is Large ribosomal subunit protein bL20 (115 aa).

This sequence belongs to the bacterial ribosomal protein bL20 family.

Binds directly to 23S ribosomal RNA and is necessary for the in vitro assembly process of the 50S ribosomal subunit. It is not involved in the protein synthesizing functions of that subunit. In Chlorobium luteolum (strain DSM 273 / BCRC 81028 / 2530) (Pelodictyon luteolum), this protein is Large ribosomal subunit protein bL20.